Reading from the N-terminus, the 474-residue chain is Methylenetetrahydrofolate--tRNA-(uracil-5-)-methyltransferase TrmFO (474 aa).

15–20 (GAGLAG) contacts FAD. Residues 453 to 474 (PLLPTAPDTTGAAGEETTQAES) are disordered.

The protein belongs to the MnmG family. TrmFO subfamily. It depends on FAD as a cofactor.

Its subcellular location is the cytoplasm. It carries out the reaction uridine(54) in tRNA + (6R)-5,10-methylene-5,6,7,8-tetrahydrofolate + NADH + H(+) = 5-methyluridine(54) in tRNA + (6S)-5,6,7,8-tetrahydrofolate + NAD(+). The enzyme catalyses uridine(54) in tRNA + (6R)-5,10-methylene-5,6,7,8-tetrahydrofolate + NADPH + H(+) = 5-methyluridine(54) in tRNA + (6S)-5,6,7,8-tetrahydrofolate + NADP(+). Functionally, catalyzes the folate-dependent formation of 5-methyl-uridine at position 54 (M-5-U54) in all tRNAs. This Nitratidesulfovibrio vulgaris (strain ATCC 29579 / DSM 644 / CCUG 34227 / NCIMB 8303 / VKM B-1760 / Hildenborough) (Desulfovibrio vulgaris) protein is Methylenetetrahydrofolate--tRNA-(uracil-5-)-methyltransferase TrmFO.